A 514-amino-acid chain; its full sequence is uncharacterized protein (514 aa).

Disordered stretches follow at residues 1-68 (MSSP…SESE), 109-244 (VPPP…RQAS), and 272-484 (RPAV…AQGC). The segment covering 368 to 384 (KPQKPKHSSPGKKPAGR) has biased composition (basic residues). Positions 385–405 (KTRESQAAAREDNDPNRDEVP) are enriched in basic and acidic residues.

This is an uncharacterized protein from Homo sapiens (Human).